We begin with the raw amino-acid sequence, 414 residues long: 2,3-bisphosphoglycerate-independent phosphoglycerate mutase (414 aa).

The protein belongs to the BPG-independent phosphoglycerate mutase family. A-PGAM subfamily.

The enzyme catalyses (2R)-2-phosphoglycerate = (2R)-3-phosphoglycerate. It participates in carbohydrate degradation; glycolysis; pyruvate from D-glyceraldehyde 3-phosphate: step 3/5. Catalyzes the interconversion of 2-phosphoglycerate and 3-phosphoglycerate. The protein is 2,3-bisphosphoglycerate-independent phosphoglycerate mutase of Saccharolobus solfataricus (strain ATCC 35092 / DSM 1617 / JCM 11322 / P2) (Sulfolobus solfataricus).